The following is a 447-amino-acid chain: Putative FBD-associated F-box protein At1g61330 (447 aa).

Positions 10–57 (KLIKRLSDELVECILSFLPVQSTLQHRVLSKRYRDTWKLSRDLDFSGI) constitute an F-box domain. An FBD domain is found at 384–416 (VKIIGYKGHWHELDIVEFFVKNAPSLKRLELQM).

The protein is Putative FBD-associated F-box protein At1g61330 of Arabidopsis thaliana (Mouse-ear cress).